The following is a 533-amino-acid chain: uncharacterized protein (533 aa).

The tract at residues 1 to 26 (MKRFFSKLFSKSPTSGRVPSPDSDYS) is disordered. Phosphoserine is present on residues serine 20 and serine 23. Tyrosine 25 is modified (phosphotyrosine). Serine 26 is subject to Phosphoserine. 10 helical membrane-spanning segments follow: residues 178-198 (ILAVLHIPVALIWLNLEHILI), 213-230 (YMRVFILAAPGYAVFEAL), 242-264 (PITYVLCFAAPLNILLNYLLVWH), 274-296 (APVAVATTFWFQSICLILYICFS), 313-333 (LSPMLHFSFHGMLMIVTEWAA), 353-373 (SILLTSTSLLFQIPFAFAVAS), 394-414 (RVAYSLALCISIFDGSLIFCF), 435-455 (IFPILSLFIVTDGLNAVGGGL), 466-486 (GLISIGSSYLFALPVTVFVVV), and 495-515 (IWCGMILSSVTAITCQFTVLF).

This sequence belongs to the multi antimicrobial extrusion (MATE) (TC 2.A.66.1) family.

The protein resides in the vacuole membrane. This is an uncharacterized protein from Schizosaccharomyces pombe (strain 972 / ATCC 24843) (Fission yeast).